The sequence spans 610 residues: Preterminal protein (610 aa).

Residues 288 to 379 form a disordered region; the sequence is TLRSGTQTGL…ESFSDDVGLS (92 aa). Positions 328–337 match the Nuclear localization signal motif; the sequence is SLPIRRRRRR. Basic residues predominate over residues 331–340; it reads IRRRRRRGTR. The span at 341-350 shows a compositional bias: basic and acidic residues; sequence RQVEREDSVR. The residue at position 549 (Ser549) is an O-(5'-phospho-DNA)-serine.

It belongs to the adenoviridae terminal protein family. In terms of assembly, heterodimer with the polymerase; this heterodimer binds to bp 9 to 18 of the genome. Interacts with host POU2F1; POU2F1 binds to the auxiliary sequences in the inverted terminal repeats and tethers the pTP-POL heterodimer to the origin DNA thereby participating in the assembly of the pre-initiation complex (POL-TP-DBP-NFIA-POU2F1). Preterminal protein is used to replicate viral genome, upon genomic encapsidation it is processed first into iTP and finally into TP by adenovirus protease.

The protein resides in the host nucleus matrix. Functionally, protein covalently bound to the viral DNA that acts as a primer for viral genomic replication by DNA strand displacement. Assembles on the viral origin of replication in an initiation complex with viral polymerase, DBP, host NFIA and host POU2F1/OCT1. During initiation, the polymerase covalently couples the first dCTP with Ser-580 of pTP. The terminal protein stimulates the template activity over 20 fold compared to protein-free templates. Neo-synthesized viral genomes are linked to two preterminal proteins, one for each 5' end. These new genomes are encapsidated in the nucleus, and during capsid maturation by viral protease, preterminal protein is first cleaved into intermediary (iTP), then into mature TP. May play a role in host nuclear matrix localization of genomic DNA. The sequence is that of Preterminal protein from Snake adenovirus serotype 1 (SnAdV-1).